The following is a 384-amino-acid chain: 8-amino-7-oxononanoate synthase (384 aa).

Position 21 (Arg-21) interacts with substrate. Pyridoxal 5'-phosphate is bound at residue 108-109 (GF). Substrate is bound at residue His-133. Residues Ser-179, His-207, and Thr-233 each coordinate pyridoxal 5'-phosphate. Lys-236 carries the N6-(pyridoxal phosphate)lysine modification. Thr-352 contacts substrate.

It belongs to the class-II pyridoxal-phosphate-dependent aminotransferase family. BioF subfamily. Homodimer. Pyridoxal 5'-phosphate is required as a cofactor.

The catalysed reaction is 6-carboxyhexanoyl-[ACP] + L-alanine + H(+) = (8S)-8-amino-7-oxononanoate + holo-[ACP] + CO2. It functions in the pathway cofactor biosynthesis; biotin biosynthesis. In terms of biological role, catalyzes the decarboxylative condensation of pimeloyl-[acyl-carrier protein] and L-alanine to produce 8-amino-7-oxononanoate (AON), [acyl-carrier protein], and carbon dioxide. The chain is 8-amino-7-oxononanoate synthase from Escherichia coli O6:H1 (strain CFT073 / ATCC 700928 / UPEC).